Reading from the N-terminus, the 234-residue chain is tRNA (guanine-N(1)-)-methyltransferase (234 aa).

S-adenosyl-L-methionine-binding positions include G115 and 135 to 140; that span reads VGDYIL.

Belongs to the RNA methyltransferase TrmD family. Homodimer.

It localises to the cytoplasm. The catalysed reaction is guanosine(37) in tRNA + S-adenosyl-L-methionine = N(1)-methylguanosine(37) in tRNA + S-adenosyl-L-homocysteine + H(+). Functionally, specifically methylates guanosine-37 in various tRNAs. The chain is tRNA (guanine-N(1)-)-methyltransferase from Rickettsia peacockii (strain Rustic).